The following is a 214-amino-acid chain: MAIGLVGRKLGMTRVFTEDGASLPVTVIEVDPNRVTQVKTEERDGYRALQVTTGARKASRVTKPRAGHFAKAGVEAGRGLWEFRLDGDQGAEIETGAELKVDIFEAGQIVDVTGISKGKGFQGVIKRHNFSMQDATHGNSLSHRAPGSIGQNQTPGRVFKGKKMAGHMGNERCTVQNLEVVRVDVERNLLLIKGAVPGSTGGNVLVRPGVKAKG.

The interval 136-156 (THGNSLSHRAPGSIGQNQTPG) is disordered. Gln-153 bears the N5-methylglutamine mark.

Belongs to the universal ribosomal protein uL3 family. Part of the 50S ribosomal subunit. Forms a cluster with proteins L14 and L19. Methylated by PrmB.

One of the primary rRNA binding proteins, it binds directly near the 3'-end of the 23S rRNA, where it nucleates assembly of the 50S subunit. In Thioalkalivibrio sulfidiphilus (strain HL-EbGR7), this protein is Large ribosomal subunit protein uL3.